Reading from the N-terminus, the 386-residue chain is Methionine aminopeptidase 1 (386 aa).

At Ala-2 the chain carries N-acetylalanine. A C6H2-type zinc finger spans residues 6–59 (TRVCETDGCSSEAKLQCPTCIKLGIQGSYFCSQECFKGSWATHKLLHKKAKDEK). The Zn(2+) site is built by Cys-9, Cys-14, Cys-22, Cys-25, Cys-36, Cys-40, His-48, and His-52. His-203 lines the a protein pocket. Residues Asp-220, Asp-231, and His-294 each contribute to the Zn(2+) site. His-301 provides a ligand contact to a protein. Residues Glu-327 and Glu-358 each coordinate Zn(2+).

The protein belongs to the peptidase M24A family. Methionine aminopeptidase type 1 subfamily. In terms of assembly, associates with the 60S ribosomal subunit of the 80S translational complex. Requires Zn(2+) as cofactor. The cofactor is Co(2+). Mn(2+) serves as cofactor. Fe(2+) is required as a cofactor.

The protein resides in the cytoplasm. It carries out the reaction Release of N-terminal amino acids, preferentially methionine, from peptides and arylamides.. Its function is as follows. Cotranslationally removes the N-terminal methionine from nascent proteins. The N-terminal methionine is often cleaved when the second residue in the primary sequence is small and uncharged (Met-Ala-, Cys, Gly, Pro, Ser, Thr, or Val). The chain is Methionine aminopeptidase 1 (METAP1) from Pongo abelii (Sumatran orangutan).